We begin with the raw amino-acid sequence, 508 residues long: tRNA(Ile2) 2-agmatinylcytidine synthetase TiaS (508 aa).

A DNA-binding region (OB) is located at residues 367–427 (ITGGHVLIEL…YQLNIEKINV (61 aa)).

The protein belongs to the TiaS family.

It is found in the cytoplasm. It carries out the reaction cytidine(34) in tRNA(Ile2) + agmatine + ATP + H2O = 2-agmatinylcytidine(34) in tRNA(Ile2) + AMP + 2 phosphate + 2 H(+). Functionally, ATP-dependent agmatine transferase that catalyzes the formation of 2-agmatinylcytidine (agm2C) at the wobble position (C34) of tRNA(Ile2), converting the codon specificity from AUG to AUA. This Methanococcus voltae (strain ATCC BAA-1334 / A3) protein is tRNA(Ile2) 2-agmatinylcytidine synthetase TiaS.